Reading from the N-terminus, the 387-residue chain is Ferrochelatase (387 aa).

Fe cation-binding residues include histidine 196 and glutamate 277.

Belongs to the ferrochelatase family.

Its subcellular location is the cytoplasm. It carries out the reaction heme b + 2 H(+) = protoporphyrin IX + Fe(2+). It functions in the pathway porphyrin-containing compound metabolism; protoheme biosynthesis; protoheme from protoporphyrin-IX: step 1/1. Its function is as follows. Catalyzes the ferrous insertion into protoporphyrin IX. In Trichodesmium erythraeum (strain IMS101), this protein is Ferrochelatase.